The sequence spans 239 residues: Uridylate kinase (239 aa).

13 to 16 contacts ATP; it reads KLSG. A UMP-binding site is contributed by G55. Residues G56 and R60 each coordinate ATP. UMP is bound by residues D75 and 136–143; that span reads TGNPFFTT. Positions 163, 169, and 172 each coordinate ATP.

This sequence belongs to the UMP kinase family. In terms of assembly, homohexamer.

The protein resides in the cytoplasm. It catalyses the reaction UMP + ATP = UDP + ADP. It participates in pyrimidine metabolism; CTP biosynthesis via de novo pathway; UDP from UMP (UMPK route): step 1/1. Inhibited by UTP. In terms of biological role, catalyzes the reversible phosphorylation of UMP to UDP. In Chromobacterium violaceum (strain ATCC 12472 / DSM 30191 / JCM 1249 / CCUG 213 / NBRC 12614 / NCIMB 9131 / NCTC 9757 / MK), this protein is Uridylate kinase.